Here is a 157-residue protein sequence, read N- to C-terminus: Protein Smg homolog (157 aa).

This sequence belongs to the Smg family.

The sequence is that of Protein Smg homolog from Idiomarina loihiensis (strain ATCC BAA-735 / DSM 15497 / L2-TR).